The chain runs to 319 residues: HTH-type transcriptional regulator YidZ (319 aa).

The 58-residue stretch at 8 to 65 folds into the HTH lysR-type domain; the sequence is LDLNLLLCLQLLMQERSVTKAAKRINVTPSAVSKSLAKLRAWFDDPLFVNSPLGLSPT. Residues 25–44 constitute a DNA-binding region (H-T-H motif); sequence VTKAAKRINVTPSAVSKSLA.

Belongs to the LysR transcriptional regulatory family.

Involved in anaerobic NO protection. The chain is HTH-type transcriptional regulator YidZ from Escherichia coli (strain K12 / MC4100 / BW2952).